The following is a 348-amino-acid chain: Hereditary hemochromatosis protein homolog (348 aa).

An N-terminal signal peptide occupies residues 1–22 (MGPRARPALFFLILLRTVAAQG). The alpha-1 stretch occupies residues 23-114 (RPPRSHSLRY…IMDNHNHSKE (92 aa)). Topologically, residues 23 to 306 (RPPRSHSLRY…WEPSLSNTLV (284 aa)) are extracellular. Residues Asn110, Asn130, and Asn234 are each glycosylated (N-linked (GlcNAc...) asparagine). The interval 115–205 (SHTLQVILGC…ELGRGVLDQQ (91 aa)) is alpha-2. 2 disulfides stabilise this stretch: Cys124–Cys187 and Cys225–Cys282. The alpha-3 stretch occupies residues 206–297 (VPPLVKVTHH…GLDQPLTATW (92 aa)). An Ig-like C1-type domain is found at 207–296 (PPLVKVTHHV…PGLDQPLTAT (90 aa)). A connecting peptide region spans residues 298–306 (EPSLSNTLV). Residues 307 to 330 (TGVISGIAVCVIIFFIGILFRILR) traverse the membrane as a helical segment. Topologically, residues 331-348 (KRQASRGAMGDYVLGECE) are cytoplasmic.

Belongs to the MHC class I family. As to quaternary structure, binds TFR through the extracellular domain in a pH-dependent manner.

Its subcellular location is the cell membrane. Functionally, binds to transferrin receptor (TFR) and reduces its affinity for iron-loaded transferrin. The chain is Hereditary hemochromatosis protein homolog (HFE) from Ceratotherium simum (White rhinoceros).